Reading from the N-terminus, the 394-residue chain is Elongation factor Tu (394 aa).

In terms of domain architecture, tr-type G spans 10–204 (KPHVNVGTIG…AVDEWIPTPT (195 aa)). A G1 region spans residues 19 to 26 (GHIDHGKT). 19–26 (GHIDHGKT) contacts GTP. T26 is a binding site for Mg(2+). Positions 60–64 (GITIN) are G2. The G3 stretch occupies residues 81–84 (DCPG). Residues 81-85 (DCPGH) and 136-139 (NKCD) contribute to the GTP site. Positions 136 to 139 (NKCD) are G4. A G5 region spans residues 174–176 (SAL).

It belongs to the TRAFAC class translation factor GTPase superfamily. Classic translation factor GTPase family. EF-Tu/EF-1A subfamily. In terms of assembly, monomer.

Its subcellular location is the cytoplasm. The catalysed reaction is GTP + H2O = GDP + phosphate + H(+). Functionally, GTP hydrolase that promotes the GTP-dependent binding of aminoacyl-tRNA to the A-site of ribosomes during protein biosynthesis. The protein is Elongation factor Tu of Mycoplasma genitalium (strain ATCC 33530 / DSM 19775 / NCTC 10195 / G37) (Mycoplasmoides genitalium).